A 170-amino-acid polypeptide reads, in one-letter code: 3-isopropylmalate dehydratase small subunit 1 (170 aa).

The protein belongs to the LeuD family. LeuD type 2 subfamily. As to quaternary structure, heterodimer of LeuC and LeuD.

It catalyses the reaction (2R,3S)-3-isopropylmalate = (2S)-2-isopropylmalate. It participates in amino-acid biosynthesis; L-leucine biosynthesis; L-leucine from 3-methyl-2-oxobutanoate: step 2/4. In terms of biological role, catalyzes the isomerization between 2-isopropylmalate and 3-isopropylmalate, via the formation of 2-isopropylmaleate. The sequence is that of 3-isopropylmalate dehydratase small subunit 1 (leuD1) from Methanopyrus kandleri (strain AV19 / DSM 6324 / JCM 9639 / NBRC 100938).